We begin with the raw amino-acid sequence, 284 residues long: ATP synthase gamma chain (284 aa).

The protein belongs to the ATPase gamma chain family. F-type ATPases have 2 components, CF(1) - the catalytic core - and CF(0) - the membrane proton channel. CF(1) has five subunits: alpha(3), beta(3), gamma(1), delta(1), epsilon(1). CF(0) has three main subunits: a, b and c.

The protein resides in the cell membrane. Produces ATP from ADP in the presence of a proton gradient across the membrane. The gamma chain is believed to be important in regulating ATPase activity and the flow of protons through the CF(0) complex. The protein is ATP synthase gamma chain of Bacillus licheniformis (strain ATCC 14580 / DSM 13 / JCM 2505 / CCUG 7422 / NBRC 12200 / NCIMB 9375 / NCTC 10341 / NRRL NRS-1264 / Gibson 46).